The chain runs to 255 residues: Large ribosomal subunit protein uL4 (255 aa).

This sequence belongs to the universal ribosomal protein uL4 family. In terms of assembly, part of the 50S ribosomal subunit.

One of the primary rRNA binding proteins, this protein initially binds near the 5'-end of the 23S rRNA. It is important during the early stages of 50S assembly. It makes multiple contacts with different domains of the 23S rRNA in the assembled 50S subunit and ribosome. Its function is as follows. Forms part of the polypeptide exit tunnel. This is Large ribosomal subunit protein uL4 from Pyrococcus abyssi (strain GE5 / Orsay).